A 526-amino-acid chain; its full sequence is MGLTLGERVQHCLLVLVSGLFLALFRLLSPGTKRPKHLPPITNPLLTLSAVQLAEKIRRGEVSSVEVVQAYIDRIQEVNPLLNALIKDRFSAALLEAARADKLIKEENGGEEVLRNQFPLLGVPMSVKESFGLQGMPNSGGLKSRGKVLASVDAPPVALLKRAGAIPLGVTNTSELCMWMESNNHLYGITSNPYNLERICGGSSGGEGSIIGGGASVFGIGSDIGGSIRMPCFFNGIFGHKPSRGVVSNDNQFPRCSGLQNEYTGSGPMCRYAEDLLPLLKIMAGPTADKLTLSKAVDLKKLRFFTIVDDGGSPLTSPVDRQLVEVQKRVAARLEADLGVTVQEVNFPQLKYSYQIWDTFLALPDKDGKPPEAFVELMADGGSVWPVWELIKRIFGRSEHTVAAIGLALMESSHSSKSSEFILKQKEDLQREMEDLLGTDGVLLYPSHPLLAPKHHHPLFMPFNFSYTGILNILGLPVTQCPLGLSKERLPLGVQVVAGLCQDHLTLAMALYLEKAFGGWVDPGVV.

Residues 12–32 (CLLVLVSGLFLALFRLLSPGT) form a helical membrane-spanning segment. Residues lysine 128 and serine 203 each act as charge relay system in the active site. Serine 227 (acyl-ester intermediate) is an active-site residue.

This sequence belongs to the amidase family.

Its subcellular location is the membrane. It catalyses the reaction N-(5Z,8Z,11Z,14Z-eicosatetraenoyl)-ethanolamine + H2O = ethanolamine + (5Z,8Z,11Z,14Z)-eicosatetraenoate. The enzyme catalyses (9Z)-octadecenamide + H2O = (9Z)-octadecenoate + NH4(+). The sequence is that of Fatty-acid amide hydrolase 2-B (faah2b) from Danio rerio (Zebrafish).